Here is a 181-residue protein sequence, read N- to C-terminus: Protein Syd (181 aa).

It belongs to the Syd family.

Its subcellular location is the cell inner membrane. Its function is as follows. Interacts with the SecY protein in vivo. May bind preferentially to an uncomplexed state of SecY, thus functioning either as a chelating agent for excess SecY in the cell or as a regulatory factor that negatively controls the translocase function. In Escherichia coli O17:K52:H18 (strain UMN026 / ExPEC), this protein is Protein Syd.